A 378-amino-acid polypeptide reads, in one-letter code: Alpha-(1,3)-fucosyltransferase fut-5 (378 aa).

The Cytoplasmic segment spans residues 1 to 7 (MKHNTLR). A helical; Signal-anchor for type II membrane protein transmembrane segment spans residues 8–28 (AVFQFSFFIGICTFIMIAGYS). Topologically, residues 29 to 378 (YQINYNQRMG…CDNSFATRFL (350 aa)) are lumenal. N44, N88, N105, N143, N171, and N307 each carry an N-linked (GlcNAc...) asparagine glycan.

Belongs to the glycosyltransferase 10 family. Ca(2+) serves as cofactor. N-glycosylated.

Its subcellular location is the golgi apparatus. It localises to the golgi stack membrane. The catalysed reaction is a beta-D-galactosyl-(1-&gt;3)-N-acetyl-beta-D-glucosaminyl derivative + GDP-beta-L-fucose = a beta-D-galactosyl-(1-&gt;3)-[alpha-L-fucosyl-(1-&gt;4)]-N-acetyl-beta-D-glucosaminyl derivative + GDP + H(+). The protein operates within protein modification; protein glycosylation. With respect to regulation, inhibited by Cu(2+) and Ni(2+), and to a lesser extent by EDTA, Mn(2+) and Mg(2+). Catalyzes the addition of fucose in alpha 1-3 linkage to GalNAc-beta-1-&gt;4-GlcNAc-beta-1-&gt;3-Gal-beta-1-&gt;4-Glc (LDNT)acceptor. Unlike fut-1, does not add fucose to Man-alpha-1-&gt;3-(Man-alpha-1-&gt;6)-Man-beta-1-&gt;4-GlcNAc-beta-1-&gt;4-GlcNAc-beta-1-Asn (M3), Man-alpha-1-&gt;3-(Man-alpha-1-&gt;6)-Man-beta-1-&gt;4-GlcNAc-beta-1-&gt;4-(Fuc-alpha-1-&gt;6)-GlcNAc-beta-1-Asn (M3F6) or GlcNAc-beta-1-&gt;2-Man-alpha-1-&gt;3-(GlcNAc-beta-1-&gt;2-Man-alpha-1-&gt;6)-Man-beta-1-4-GlcNAc-beta-1-&gt;4-(Fuc-alpha-1-&gt;6)-GlcNAc-beta-1-Asn (GnM3F6) acceptors. The polypeptide is Alpha-(1,3)-fucosyltransferase fut-5 (Caenorhabditis elegans).